Here is a 332-residue protein sequence, read N- to C-terminus: Glyceraldehyde-3-phosphate dehydrogenase 2 (332 aa).

NAD(+) is bound by residues arginine 11, isoleucine 12, and aspartate 33. Glycyl lysine isopeptide (Lys-Gly) (interchain with G-Cter in ubiquitin) cross-links involve residues lysine 46 and lysine 63. Threonine 120 contacts NAD(+). D-glyceraldehyde 3-phosphate is bound by residues 149-151 (SCT), threonine 180, 209-210 (TG), and arginine 232. Cysteine 150 functions as the Nucleophile in the catalytic mechanism. Serine 302 bears the Phosphoserine mark. 2 residues coordinate NAD(+): asparagine 314 and tyrosine 318.

It belongs to the glyceraldehyde-3-phosphate dehydrogenase family. Homotetramer.

It localises to the cytoplasm. It catalyses the reaction D-glyceraldehyde 3-phosphate + phosphate + NAD(+) = (2R)-3-phospho-glyceroyl phosphate + NADH + H(+). The catalysed reaction is NADH + H2O = (6R)-NADHX. The enzyme catalyses NADH + H2O = (6S)-NADHX. It carries out the reaction NADPH + H2O = (6R)-NADPHX. It catalyses the reaction NADPH + H2O = (6S)-NADPHX. The protein operates within carbohydrate degradation; glycolysis; pyruvate from D-glyceraldehyde 3-phosphate: step 1/5. In terms of biological role, glyceraldehyde-3-phosphate dehydrogenase (GAPDH) involved in glycolysis and gluconeogenesis. Catalyzes the reaction of glyceraldehyde-3-phosphate to 1,3 bis-phosphoglycerate. The contribution of the TDH1, TDH2, and TDH3 to the total glyceraldehyde-3-phosphate dehydrogenase activity is 10-15, 25-30, and 50-60%, respectively. As a side activity, catalyzes the hydration of the nicotinamide ring of NADH or NADPH at the C6 position to give the corresponding hydrates, NADHX and NADPHX, which exist as R and S epimers, that cannot act as electron donors or acceptors and inhibit several dehydrogenases, making them toxic. The chain is Glyceraldehyde-3-phosphate dehydrogenase 2 from Saccharomyces cerevisiae (strain ATCC 204508 / S288c) (Baker's yeast).